The primary structure comprises 351 residues: UDP-3-O-acylglucosamine N-acyltransferase (351 aa).

The active-site Proton acceptor is the His-240.

This sequence belongs to the transferase hexapeptide repeat family. LpxD subfamily. Homotrimer.

The enzyme catalyses a UDP-3-O-[(3R)-3-hydroxyacyl]-alpha-D-glucosamine + a (3R)-hydroxyacyl-[ACP] = a UDP-2-N,3-O-bis[(3R)-3-hydroxyacyl]-alpha-D-glucosamine + holo-[ACP] + H(+). Its pathway is bacterial outer membrane biogenesis; LPS lipid A biosynthesis. Its function is as follows. Catalyzes the N-acylation of UDP-3-O-acylglucosamine using 3-hydroxyacyl-ACP as the acyl donor. Is involved in the biosynthesis of lipid A, a phosphorylated glycolipid that anchors the lipopolysaccharide to the outer membrane of the cell. The polypeptide is UDP-3-O-acylglucosamine N-acyltransferase (Pseudomonas savastanoi pv. phaseolicola (strain 1448A / Race 6) (Pseudomonas syringae pv. phaseolicola (strain 1448A / Race 6))).